The primary structure comprises 246 residues: Sulfate transporter CysZ (246 aa).

4 helical membrane-spanning segments follow: residues L24–A44, I69–V89, L148–F168, and L214–F234.

Belongs to the CysZ family.

The protein resides in the cell inner membrane. Functionally, high affinity, high specificity proton-dependent sulfate transporter, which mediates sulfate uptake. Provides the sulfur source for the cysteine synthesis pathway. This chain is Sulfate transporter CysZ, found in Pseudomonas paraeruginosa (strain DSM 24068 / PA7) (Pseudomonas aeruginosa (strain PA7)).